The sequence spans 357 residues: 3-dehydroquinate synthase (357 aa).

NAD(+)-binding positions include 104–108 (GVVGD), 128–129 (TT), lysine 141, and 168–171 (FLET). Positions 183, 243, and 260 each coordinate Zn(2+).

The protein belongs to the sugar phosphate cyclases superfamily. Dehydroquinate synthase family. Requires NAD(+) as cofactor. It depends on Co(2+) as a cofactor. The cofactor is Zn(2+).

Its subcellular location is the cytoplasm. The catalysed reaction is 7-phospho-2-dehydro-3-deoxy-D-arabino-heptonate = 3-dehydroquinate + phosphate. It participates in metabolic intermediate biosynthesis; chorismate biosynthesis; chorismate from D-erythrose 4-phosphate and phosphoenolpyruvate: step 2/7. Catalyzes the conversion of 3-deoxy-D-arabino-heptulosonate 7-phosphate (DAHP) to dehydroquinate (DHQ). This chain is 3-dehydroquinate synthase, found in Streptococcus pyogenes serotype M3 (strain ATCC BAA-595 / MGAS315).